A 728-amino-acid chain; its full sequence is Fibulin-1 (728 aa).

An N-terminal signal peptide occupies residues 1–17 (MRICFLLLAFLVAETFA). 30 cysteine pairs are disulfide-bonded: C23/C49, C24/C56, C37/C57, C66/C94, C79/C95, C97/C121, C98/C128, C111/C129, C159/C168, C164/C178, C180/C279, C285/C298, C292/C307, C347/C359, C353/C368, C375/C388, C394/C404, C399/C413, C415/C428, C434/C448, C442/C457, C459/C472, C478/C489, C485/C498, C500/C513, C519/C534, C530/C543, C545/C558, C564/C576, and C569/C585. Anaphylatoxin-like domains follow at residues 23–64 (CCAG…LLDN), 65–96 (ACDSGTDIAKEEESCPSNINILGGGLKKECCD), and 97–129 (CCLLAKDLLNRNEPCVAPVGFSAGCLRSFNKCC). An EGF-like 1 domain is found at 155-194 (LGDRCASSHCEHLCHDRGGEKVECSCRSGFDLAPDGMACV). Residues 195-280 (DRNECLTRQS…GWLFQHGHCV (86 aa)) form the EGF-like 2; calcium-binding domain. An EGF-like 3; calcium-binding domain is found at 281–344 (DVDECNLGSH…YPKNGMCNDI (64 aa)). An EGF-like 4; calcium-binding domain is found at 343–389 (DIDECVTGHNCGAGEECVNTPGSFRCQQKGNLCAHGYEVNGATGFCE). Residues 390–429 (DVNECQQGVCGSMECINLPGTYKCKCGPGYEFNDAKKRCE) form the EGF-like 5; calcium-binding domain. In terms of domain architecture, EGF-like 6; calcium-binding spans 430 to 473 (DVDECIKFAGHVCDLSAECINTIGSFECKCKPGFQLASDGRRCE). Positions 474–514 (DVNECTTGIAACEQKCVNIPGSYQCICDRGFALGPDGTKCE) constitute an EGF-like 7; calcium-binding domain. Positions 515 to 559 (DIDECSIWAGSGNDLCMGGCINTKGSYLCQCPPGYKIQPDGRTCV) constitute an EGF-like 8; calcium-binding domain. Residues 560–610 (DVDECAMGECAGSDKVCVNTLGSFKCHSIDCPTNYIHDSLNKNQIADGYSC) form the EGF-like 9; calcium-binding domain. N624 is a glycosylation site (N-linked (GlcNAc...) asparagine).

Belongs to the fibulin family. In terms of assembly, homomultimerizes and interacts with various extracellular matrix components. As to expression, expressed in head muscle cells, anterior and posterior intestinal cells. Isoform a: Expressed in male and hermaphrodite gonad, anterior and posterior intestine and pharyngeal basement membranes, body-wall muscle, GLR cells, uterine attachment and mechanosensory neurons. Isoform c: Expressed on ALM/PLM mechanosensory neuron attachments, in flexible tracks connecting the pharyngeal, body-wall-muscle basement membranes and in uterine attachments.

It is found in the secreted. The protein localises to the extracellular space. It localises to the extracellular matrix. Its subcellular location is the basement membrane. In terms of biological role, incorporated into fibronectin-containing matrix fibers. Plays a role in cell adhesion and migration along protein fibers within the extracellular matrix (ECM). Important for certain developmental processes and contributes to the supramolecular organization of ECM architecture, in particular to those of basement membranes. Involved in regulating the shape and adhesion of cells in the developing pharynx, intestine, body-wall muscle and gonadal tissue. During gonadogenesis, regulates the width of gonads and the migration of distal tip cells (DTC). Together with type IV collagen let-2 and downstream of metalloprotease mig-17, recruits nidogen nid-1 to the gonad basement membrane thereby inducing basement membrane remodeling required for the directional migration of DTCs. Acts antagonistically with metalloprotease gon-1 to maintain optimal levels of type IV collagen emb-9 in the gonad basement membrane during gonadogenesis. Required for larval development. Its function is as follows. Involved in the assembly of the flexible hemicentin-containing tracks found joining the pharynx and body-wall-muscle basement membranes. The protein is Fibulin-1 (fbl-1) of Caenorhabditis elegans.